A 373-amino-acid chain; its full sequence is Ribosomal protein uL16 3-hydroxylase (373 aa).

One can recognise a JmjC domain in the interval 92–219; it reads PTAALMRPFR…LISGFADYVL (128 aa). Residues Ser-114, 125-127, Arg-140, and His-187 each bind substrate; that span reads HLD. Fe cation is bound by residues His-125 and Asp-127. His-187 serves as a coordination point for Fe cation.

Belongs to the ROX family. RoxA/YcfD subfamily. In terms of assembly, homodimer. Fe(2+) is required as a cofactor.

It catalyses the reaction L-arginyl-[ribosomal protein uL16] + 2-oxoglutarate + O2 = (3R)-3-hydroxy-L-arginyl-[ribosomal protein uL16] + succinate + CO2. Its function is as follows. Growth-regulating oxygenase that catalyzes the hydroxylation of ribosomal protein uL16 on 'Arg-81'. This Escherichia coli (strain K12) protein is Ribosomal protein uL16 3-hydroxylase (roxA).